Here is a 303-residue protein sequence, read N- to C-terminus: Oxygen-dependent coproporphyrinogen-III oxidase (303 aa).

Ser93 is a substrate binding site. Positions 97 and 107 each coordinate a divalent metal cation. The active-site Proton donor is the His107. Residue 109–111 (NVR) participates in substrate binding. Positions 146 and 176 each coordinate a divalent metal cation. Residues 241–276 (YVEFNLVYDRGTLFGLQSGGRTESILMSLPPQVRWG) form an important for dimerization region. Position 259–261 (259–261 (GGR)) interacts with substrate.

It belongs to the aerobic coproporphyrinogen-III oxidase family. As to quaternary structure, homodimer. It depends on a divalent metal cation as a cofactor.

Its subcellular location is the cytoplasm. It carries out the reaction coproporphyrinogen III + O2 + 2 H(+) = protoporphyrinogen IX + 2 CO2 + 2 H2O. Its pathway is porphyrin-containing compound metabolism; protoporphyrin-IX biosynthesis; protoporphyrinogen-IX from coproporphyrinogen-III (O2 route): step 1/1. Its function is as follows. Involved in the heme biosynthesis. Catalyzes the aerobic oxidative decarboxylation of propionate groups of rings A and B of coproporphyrinogen-III to yield the vinyl groups in protoporphyrinogen-IX. In Pseudomonas putida (strain ATCC 700007 / DSM 6899 / JCM 31910 / BCRC 17059 / LMG 24140 / F1), this protein is Oxygen-dependent coproporphyrinogen-III oxidase.